We begin with the raw amino-acid sequence, 432 residues long: Glutamate-1-semialdehyde 2,1-aminomutase (432 aa).

At Lys-265 the chain carries N6-(pyridoxal phosphate)lysine.

Belongs to the class-III pyridoxal-phosphate-dependent aminotransferase family. HemL subfamily. As to quaternary structure, homodimer. Requires pyridoxal 5'-phosphate as cofactor.

Its subcellular location is the cytoplasm. The catalysed reaction is (S)-4-amino-5-oxopentanoate = 5-aminolevulinate. It participates in porphyrin-containing compound metabolism; protoporphyrin-IX biosynthesis; 5-aminolevulinate from L-glutamyl-tRNA(Glu): step 2/2. The polypeptide is Glutamate-1-semialdehyde 2,1-aminomutase (Histophilus somni (strain 129Pt) (Haemophilus somnus)).